Here is a 336-residue protein sequence, read N- to C-terminus: MFLTLIAAIISFMVSAFTMPYFIKFYQLKKIGGQQMHEDVKQHLAKAGTPTMGGTVFLLVATAVSLLVSLFSIKNTQSLALISGILSIVVIYGIIGFLDDFLKIFKQINEGLTAKQKLALQLVGGLMFYFLHVSPSGISSINVFGYQLPLGIFYLFFVLFWVVGFSNAVNLTDGIDGLASISVVISLVTYGVIAYVQSQFDVLLLIGAMIGALLGFFCFNHKPAKVFMGDVGSLALGAMLAAISIALRQEWTLLIIGIVYVLETSSVMLQVSYFKYTKKKYGEGRRIFRMTPFHHHLELGGLSGKGKKWSEWQVDAFLWGVGSLASLLVLAILYVF.

The next 10 helical transmembrane spans lie at 3 to 23 (LTLI…PYFI), 53 to 73 (GGTV…LFSI), 78 to 98 (SLAL…IGFL), 118 to 138 (LALQ…PSGI), 143 to 163 (VFGY…FWVV), 174 to 194 (GIDG…GVIA), 200 to 220 (FDVL…FCFN), 226 to 246 (VFMG…ISIA), 251 to 271 (WTLL…MLQV), and 316 to 336 (AFLW…LYVF).

Belongs to the glycosyltransferase 4 family. MraY subfamily. Mg(2+) serves as cofactor.

Its subcellular location is the cell membrane. It catalyses the reaction UDP-N-acetyl-alpha-D-muramoyl-L-alanyl-gamma-D-glutamyl-L-lysyl-D-alanyl-D-alanine + di-trans,octa-cis-undecaprenyl phosphate = Mur2Ac(oyl-L-Ala-gamma-D-Glu-L-Lys-D-Ala-D-Ala)-di-trans,octa-cis-undecaprenyl diphosphate + UMP. It participates in cell wall biogenesis; peptidoglycan biosynthesis. Catalyzes the initial step of the lipid cycle reactions in the biosynthesis of the cell wall peptidoglycan: transfers peptidoglycan precursor phospho-MurNAc-pentapeptide from UDP-MurNAc-pentapeptide onto the lipid carrier undecaprenyl phosphate, yielding undecaprenyl-pyrophosphoryl-MurNAc-pentapeptide, known as lipid I. The polypeptide is Phospho-N-acetylmuramoyl-pentapeptide-transferase (Streptococcus pyogenes serotype M1).